The sequence spans 716 residues: Phospholipid phosphatase-related protein type 3 (716 aa).

A run of 3 helical transmembrane segments spans residues 18–38 (LPCF…SLYF), 70–90 (LIPL…SIMV), and 131–151 (FVGV…VIQL). A glycan (N-linked (GlcNAc...) asparagine) is linked at N167. Transmembrane regions (helical) follow at residues 205 to 225 (HATL…SVIS), 231 to 251 (LKPI…LTQI), and 261 to 281 (VYAG…HAVG). Positions 311–334 (SMYQQNKSVSTDELGPPGRLEGVP) are disordered. Positions 312 to 321 (MYQQNKSVST) are enriched in polar residues. N316 carries an N-linked (GlcNAc...) asparagine glycan. Residues S320 and S351 each carry the phosphoserine modification. Residue T374 is modified to Phosphothreonine. Residues 416–488 (GRGLGLPDEA…RVILPPRPGP (73 aa)) form a disordered region. S426 carries the phosphoserine modification. A compositionally biased stretch (acidic residues) spans 437-460 (VAEEEEEEEEEEEEEEEEEEEEEG). Residue S506 is modified to Phosphoserine. Positions 548-589 (AMSKAAGGPKAETASSSSASSDSSQYRSPSDRDSASIVTIDA) are disordered. A compositionally biased stretch (low complexity) spans 562-575 (SSSSASSDSSQYRS). S641 is modified (phosphoserine). Residues 664 to 694 (GEGLPPPGASEGALGAGSRESTLRRQVGALG) form a disordered region.

This sequence belongs to the PA-phosphatase related phosphoesterase family.

Its subcellular location is the membrane. The protein is Phospholipid phosphatase-related protein type 3 of Rattus norvegicus (Rat).